The primary structure comprises 493 residues: Xaa-Pro dipeptidase (493 aa).

The residue at position 2 (Ala2) is an N-acetylalanine. At Ser167 the chain carries Phosphoserine. Residue His255 participates in a dipeptide binding. The Mn(2+) site is built by Asp276, Asp287, and His370. A dipeptide is bound at residue Asp287. A dipeptide is bound by residues His377 and Arg398. 2 residues coordinate Mn(2+): Glu412 and Glu452.

Belongs to the peptidase M24B family. Eukaryotic-type prolidase subfamily. Homodimer. It depends on Mn(2+) as a cofactor.

The enzyme catalyses Xaa-L-Pro dipeptide + H2O = an L-alpha-amino acid + L-proline. Specifically inhibited by the pseudodipeptide CQ31. Inhibition by CQ31 indirectly activates the CARD8 inflammasome: dipeptide accumulation following PEPD inactivation weaky inhibit dipeptidyl peptidases DDP8 and DPP9, relieving DPP8- and/or DPP9-mediated inhibition of CARD8. Its function is as follows. Dipeptidase that catalyzes the hydrolysis of dipeptides with a prolyl (Xaa-Pro) or hydroxyprolyl residue in the C-terminal position. The preferred dipeptide substrate is Gly-Pro, but other Xaa-Pro dipeptides, such as Ala-Pro, Met-Pro, Phe-Pro, Val-Pro and Leu-Pro, can be cleaved. Plays an important role in collagen metabolism because the high level of iminoacids in collagen. This chain is Xaa-Pro dipeptidase, found in Homo sapiens (Human).